Here is a 183-residue protein sequence, read N- to C-terminus: Small acidic protein (183 aa).

The disordered stretch occupies residues 1 to 183; it reads MSAARESHPH…KMMFVKSSGS (183 aa). Residue Lys13 forms a Glycyl lysine isopeptide (Lys-Gly) (interchain with G-Cter in SUMO2) linkage. Ser15 and Ser17 each carry phosphoserine. Positions 48-78 are enriched in basic and acidic residues; it reads GKKEHTGRLVIGDHKSTSHFRTGEEDKKINE. A Glycyl lysine isopeptide (Lys-Gly) (interchain with G-Cter in SUMO2) cross-link involves residue Lys62. Ser63 is modified (phosphoserine). Residue Lys75 forms a Glycyl lysine isopeptide (Lys-Gly) (interchain with G-Cter in SUMO2) linkage. Ser87, Ser127, and Ser147 each carry phosphoserine. Over residues 106-149 the composition is skewed to acidic residues; that stretch reads EVEDHDGEGDVAGDDDDNDDDSPDPESPDDSESDSESEKEESAE. The segment covering 153–171 has biased composition (basic and acidic residues); that stretch reads AAEHPDEVEDPKNKKDAKS. Residues Lys174 and Lys179 each carry the N6-acetyllysine modification.

Belongs to the SMAP family.

The protein is Small acidic protein (SMAP) of Pongo abelii (Sumatran orangutan).